The primary structure comprises 487 residues: E3 ubiquitin-protein ligase RNF8 (487 aa).

Residues 38 to 92 (VTVGRGFGVTYQLVSKICPLMISRNHCILKQNAEGQWTIKDNKSLNGVWLNRERL) form the FHA domain. The tract at residues 68–72 (QNAEG) is required for interaction with PIWIL1. 2 disordered regions span residues 143–176 (MMEK…KSKI) and 182–201 (EPGQ…QPSE). Residue Ser157 is modified to Phosphoserine. An RING-type zinc finger spans residues 405–443 (CIICSEYFVEAVTLNCAHSFCSYCINEWMKRKVECPICR).

It belongs to the RNF8 family. Homodimer. Forms a E2-E3 ubiquitin ligase complex composed of the RNF8 homodimer and a E2 heterodimer of UBE2N and UBE2V2. Interacts with class III E2s, including UBE2E1, UBE2E2, and UBE2E3 and with UBE2N. Interacts with RXRA. Interacts (via FHA domain) with phosphorylated HERC2 (via C-terminus). Interacts with PIWIL1; leading to sequester RNF8 in the cytoplasm. Interacts with WRAP53/TCAB1. In terms of processing, autoubiquitinated through 'Lys-48' and 'Lys-63' of ubiquitin. 'Lys-63' polyubiquitination is mediated by UBE2N. 'Lys-29'-type polyubiquitination is also observed, but it doesn't require its own functional RING-type zinc finger.

The protein localises to the nucleus. The protein resides in the cytoplasm. It localises to the midbody. It is found in the chromosome. Its subcellular location is the telomere. The enzyme catalyses S-ubiquitinyl-[E2 ubiquitin-conjugating enzyme]-L-cysteine + [acceptor protein]-L-lysine = [E2 ubiquitin-conjugating enzyme]-L-cysteine + N(6)-ubiquitinyl-[acceptor protein]-L-lysine.. The protein operates within protein modification; protein ubiquitination. Its function is as follows. E3 ubiquitin-protein ligase that plays a key role in DNA damage signaling via 2 distinct roles: by mediating the 'Lys-63'-linked ubiquitination of histones H2A and H2AX and promoting the recruitment of DNA repair proteins at double-strand breaks (DSBs) sites, and by catalyzing 'Lys-48'-linked ubiquitination to remove target proteins from DNA damage sites. Following DNA DSBs, it is recruited to the sites of damage by ATM-phosphorylated MDC1 and catalyzes the 'Lys-63'-linked ubiquitination of histones H2A and H2AX, thereby promoting the formation of TP53BP1 and BRCA1 ionizing radiation-induced foci (IRIF). Also controls the recruitment of UIMC1-BRCC3 (RAP80-BRCC36) and PAXIP1/PTIP to DNA damage sites. Promotes the recruitment of NBN to DNA damage sites by catalyzing 'Lys-6'-linked ubiquitination of NBN. Also recruited at DNA interstrand cross-links (ICLs) sites and catalyzes 'Lys-63'-linked ubiquitination of histones H2A and H2AX, leading to recruitment of FAAP20 and Fanconi anemia (FA) complex, followed by interstrand cross-link repair. H2A ubiquitination also mediates the ATM-dependent transcriptional silencing at regions flanking DSBs in cis, a mechanism to avoid collision between transcription and repair intermediates. Promotes the formation of 'Lys-63'-linked polyubiquitin chains via interactions with the specific ubiquitin-conjugating UBE2N/UBC13 and ubiquitinates non-histone substrates such as PCNA. Substrates that are polyubiquitinated at 'Lys-63' are usually not targeted for degradation. Also catalyzes the formation of 'Lys-48'-linked polyubiquitin chains via interaction with the ubiquitin-conjugating UBE2L6/UBCH8, leading to degradation of substrate proteins such as CHEK2, JMJD2A/KDM4A and KU80/XRCC5: it is still unclear how the preference toward 'Lys-48'- versus 'Lys-63'-linked ubiquitination is regulated but it could be due to RNF8 ability to interact with specific E2 specific ligases. For instance, interaction with phosphorylated HERC2 promotes the association between RNF8 and UBE2N/UBC13 and favors the specific formation of 'Lys-63'-linked ubiquitin chains. Promotes non-homologous end joining (NHEJ) by promoting the 'Lys-48'-linked ubiquitination and degradation the of KU80/XRCC5. Following DNA damage, mediates the ubiquitination and degradation of JMJD2A/KDM4A in collaboration with RNF168, leading to unmask H4K20me2 mark and promote the recruitment of TP53BP1 at DNA damage sites. Following DNA damage, mediates the ubiquitination and degradation of POLD4/p12, a subunit of DNA polymerase delta. In the absence of POLD4, DNA polymerase delta complex exhibits higher proofreading activity. In addition to its function in damage signaling, also plays a role in higher-order chromatin structure by mediating extensive chromatin decondensation. Involved in the activation of ATM by promoting histone H2B ubiquitination, which indirectly triggers histone H4 'Lys-16' acetylation (H4K16ac), establishing a chromatin environment that promotes efficient activation of ATM kinase. Required in the testis, where it plays a role in the replacement of histones during spermatogenesis. At uncapped telomeres, promotes the joining of deprotected chromosome ends by inducing H2A ubiquitination and TP53BP1 recruitment, suggesting that it may enhance cancer development by aggravating telomere-induced genome instability in case of telomeric crisis. Promotes the assembly of RAD51 at DNA DSBs in the absence of BRCA1 and TP53BP1 Also involved in class switch recombination in immune system, via its role in regulation of DSBs repair. May be required for proper exit from mitosis after spindle checkpoint activation and may regulate cytokinesis. May play a role in the regulation of RXRA-mediated transcriptional activity. Not involved in RXRA ubiquitination by UBE2E2. The sequence is that of E3 ubiquitin-protein ligase RNF8 from Bos taurus (Bovine).